The following is a 403-amino-acid chain: Phosphopentomutase (403 aa).

Mn(2+)-binding residues include Asp13, Asp298, His303, Asp339, His340, and His351.

The protein belongs to the phosphopentomutase family. The cofactor is Mn(2+).

The protein resides in the cytoplasm. The enzyme catalyses 2-deoxy-alpha-D-ribose 1-phosphate = 2-deoxy-D-ribose 5-phosphate. It catalyses the reaction alpha-D-ribose 1-phosphate = D-ribose 5-phosphate. It participates in carbohydrate degradation; 2-deoxy-D-ribose 1-phosphate degradation; D-glyceraldehyde 3-phosphate and acetaldehyde from 2-deoxy-alpha-D-ribose 1-phosphate: step 1/2. Functionally, isomerase that catalyzes the conversion of deoxy-ribose 1-phosphate (dRib-1-P) and ribose 1-phosphate (Rib-1-P) to deoxy-ribose 5-phosphate (dRib-5-P) and ribose 5-phosphate (Rib-5-P), respectively. This chain is Phosphopentomutase, found in Streptococcus thermophilus.